We begin with the raw amino-acid sequence, 433 residues long: 3-phosphoshikimate 1-carboxyvinyltransferase (433 aa).

Positions 21, 22, and 26 each coordinate 3-phosphoshikimate. K21 serves as a coordination point for phosphoenolpyruvate. G96 and R124 together coordinate phosphoenolpyruvate. 3-phosphoshikimate is bound by residues S167, S168, Q169, S195, D310, and K337. A phosphoenolpyruvate-binding site is contributed by Q169. D310 acts as the Proton acceptor in catalysis. Phosphoenolpyruvate is bound by residues R341, R384, and K410.

It belongs to the EPSP synthase family. In terms of assembly, monomer.

The protein localises to the cytoplasm. The catalysed reaction is 3-phosphoshikimate + phosphoenolpyruvate = 5-O-(1-carboxyvinyl)-3-phosphoshikimate + phosphate. It participates in metabolic intermediate biosynthesis; chorismate biosynthesis; chorismate from D-erythrose 4-phosphate and phosphoenolpyruvate: step 6/7. Functionally, catalyzes the transfer of the enolpyruvyl moiety of phosphoenolpyruvate (PEP) to the 5-hydroxyl of shikimate-3-phosphate (S3P) to produce enolpyruvyl shikimate-3-phosphate and inorganic phosphate. The sequence is that of 3-phosphoshikimate 1-carboxyvinyltransferase from Clostridium botulinum (strain Eklund 17B / Type B).